Here is a 259-residue protein sequence, read N- to C-terminus: Deoxyribose-phosphate aldolase (259 aa).

The active-site Proton donor/acceptor is the Asp-102. The active-site Schiff-base intermediate with acetaldehyde is Lys-167. Lys-201 functions as the Proton donor/acceptor in the catalytic mechanism.

This sequence belongs to the DeoC/FbaB aldolase family. DeoC type 2 subfamily.

Its subcellular location is the cytoplasm. The catalysed reaction is 2-deoxy-D-ribose 5-phosphate = D-glyceraldehyde 3-phosphate + acetaldehyde. It participates in carbohydrate degradation; 2-deoxy-D-ribose 1-phosphate degradation; D-glyceraldehyde 3-phosphate and acetaldehyde from 2-deoxy-alpha-D-ribose 1-phosphate: step 2/2. In terms of biological role, catalyzes a reversible aldol reaction between acetaldehyde and D-glyceraldehyde 3-phosphate to generate 2-deoxy-D-ribose 5-phosphate. This chain is Deoxyribose-phosphate aldolase, found in Escherichia coli (strain SMS-3-5 / SECEC).